We begin with the raw amino-acid sequence, 1243 residues long: Zinc finger protein ZFAT (1243 aa).

A C2H2-type 1 zinc finger spans residues 12–35 (FMCKCCNLFSPNQSELLSHVSEKH). Disordered regions lie at residues 51–116 (PLST…PSSL) and 147–189 (GEAG…GKEA). Positions 70–81 (MKRKRGRPKGST) are enriched in basic residues. Residues 116–141 (LECSKCCRKFSNTRQLRKHICIIVLN) form a C2H2-type 2; degenerate zinc finger. Positions 156–189 (ELEKKCKEDDREKASKRPRSQKTEKVQKISGKEA) are enriched in basic and acidic residues. 7 C2H2-type zinc fingers span residues 271–293 (FTCE…LRIH), 299–321 (YKCP…LRKH), 326–349 (FACD…ERVH), 354–377 (QHCR…RDAH), 404–426 (YDCH…MLVH), 432–454 (FACE…VRKH), and 458–481 (YVCA…KEVH). Cys273, Cys276, His289, His293, Cys301, Cys304, His317, His321, Cys328, Cys331, His344, His349, Cys356, Cys359, His372, His377, Cys406, Cys409, His422, and His426 together coordinate Zn(2+). Zn(2+) is bound by residues Cys460, Cys463, His476, and His481. 3 disordered regions span residues 534 to 570 (EACP…AEST), 603 to 625 (TSSA…SSVQ), and 638 to 705 (AQSA…CKAA). Residues 610–620 (AAPEKPPDMQH) show a composition bias toward basic and acidic residues. A compositionally biased stretch (polar residues) spans 638–650 (AQSAGSDQESHGA). C2H2-type zinc fingers lie at residues 742–764 (LECE…VRTH), 770–793 (YYCS…IQKH), 798–822 (LKCP…LKVH), 830–853 (YSCP…KTNH), 880–903 (MKCP…IWAH), 909–931 (FKCS…MNRH), 937–959 (HLCD…KLLH), 966–988 (FKCT…MEQH), 994–1017 (FRCA…NRKH), and 1041–1064 (LKCP…KNKH). The Zn(2+) site is built by Cys772, Cys775, His788, His793, Cys800, Cys805, His818, His822, Cys832, Cys835, His848, His853, Cys882, Cys885, His899, His903, Cys911, Cys914, His927, His931, Cys939, Cys942, His955, and Leu958.

Isoform 1 is strongly expressed in placenta, spleen, kidney, testis and peripheral blood leukocytes. Expressed in CD4+ and CD8+ T-cells, CD19+ B-cells and CB14+ monocytes. Isoform 3 is strongly expressed in placenta, ovary, tonsil, CD19+ B-cells and CD14+ monocytes.

It localises to the nucleus. The protein localises to the cytoplasm. It is found in the cytosol. Functionally, may be involved in transcriptional regulation. Overexpression causes down-regulation of a number of genes involved in the immune response. Some genes are also up-regulated. This chain is Zinc finger protein ZFAT (ZFAT), found in Homo sapiens (Human).